A 63-amino-acid polypeptide reads, in one-letter code: Cecropin-C (63 aa).

An N-terminal signal peptide occupies residues 1–23; the sequence is MNFNKIFVFVALILAISLGQSEA. Arg62 carries the post-translational modification Arginine amide.

The protein belongs to the cecropin family.

It is found in the secreted. In terms of biological role, cecropins have lytic and antibacterial activity against several Gram-positive and Gram-negative bacteria. The protein is Cecropin-C (CecC) of Drosophila orena (Fruit fly).